We begin with the raw amino-acid sequence, 186 residues long: MTVRDVIQKIEPRMKKTIEAFQHELASIRTGKATTALLDRVKVEAYGSQMPLKQVGNVGVLDAHTLTVQVWDKSMVGATERAIRDAGLGLNPSADGQNIRISIPPLTEERRKEFVKLTKKFGEDSKVSLRNHRRDLIHEVEKLEKEKLISEDELKRGKKDADDLLHKYEKQITELIAQKEKEIMEV.

Belongs to the RRF family.

Its subcellular location is the cytoplasm. Functionally, responsible for the release of ribosomes from messenger RNA at the termination of protein biosynthesis. May increase the efficiency of translation by recycling ribosomes from one round of translation to another. The protein is Ribosome-recycling factor of Chlorobaculum tepidum (strain ATCC 49652 / DSM 12025 / NBRC 103806 / TLS) (Chlorobium tepidum).